The primary structure comprises 439 residues: Xylose isomerase (439 aa).

Catalysis depends on residues H98 and D101. Mg(2+)-binding residues include E229, E265, H268, D293, D304, D306, and D335.

This sequence belongs to the xylose isomerase family. Homotetramer. Requires Mg(2+) as cofactor.

The protein resides in the cytoplasm. It catalyses the reaction alpha-D-xylose = alpha-D-xylulofuranose. In terms of biological role, involved in D-xylose catabolism. The chain is Xylose isomerase (xylA) from Staphylococcus xylosus.